The primary structure comprises 316 residues: Transaldolase (316 aa).

Residue Lys-132 is the Schiff-base intermediate with substrate of the active site.

The protein belongs to the transaldolase family. Type 1 subfamily.

It localises to the cytoplasm. It catalyses the reaction D-sedoheptulose 7-phosphate + D-glyceraldehyde 3-phosphate = D-erythrose 4-phosphate + beta-D-fructose 6-phosphate. It functions in the pathway carbohydrate degradation; pentose phosphate pathway; D-glyceraldehyde 3-phosphate and beta-D-fructose 6-phosphate from D-ribose 5-phosphate and D-xylulose 5-phosphate (non-oxidative stage): step 2/3. Transaldolase is important for the balance of metabolites in the pentose-phosphate pathway. In Vibrio cholerae serotype O1 (strain ATCC 39315 / El Tor Inaba N16961), this protein is Transaldolase.